We begin with the raw amino-acid sequence, 1307 residues long: Cellulose synthase 2 operon protein C (1307 aa).

The first 55 residues, 1–55 (MTRPRGPAPRDGAAWRRDPARRVLLRDAVRGREGGLRLACAVMAGLIVSGGVACA), serve as a signal peptide directing secretion. 9 TPR repeats span residues 97–130 (LELL…EPDN), 270–303 (LDGL…EPIT), 339–372 (AAND…DPHD), 374–406 (DALG…GPDA), 458–491 (LTVL…APRD), 493–525 (GALF…APAM), 528–561 (RLEA…DPDD), 754–787 (IGLA…HPDS), and 788–821 (VEAH…KPAN).

It belongs to the AcsC/BcsC family.

The protein resides in the cell outer membrane. The protein operates within glycan metabolism; bacterial cellulose biosynthesis. In terms of biological role, required for maximal bacterial cellulose synthesis. The sequence is that of Cellulose synthase 2 operon protein C (bcsCII) from Komagataeibacter xylinus (Gluconacetobacter xylinus).